The sequence spans 454 residues: Golgi reassembly-stacking protein 2 (454 aa).

Residue G2 is the site of N-myristoyl glycine attachment. 2 PDZ GRASP-type domains span residues 15–105 and 111–199; these read EGYH…FCSF and NVWH…YGYL. Positions 15 to 215 are GRASP; sequence EGYHVLRVQE…PFEEGKKISL (201 aa). Residues R30 and R47 each carry the dimethylated arginine modification. The tract at residues 194–199 is important for membrane binding; it reads IGYGYL. S214 is modified (phosphoserine). T222 carries the phosphothreonine modification. Position 225 is a phosphothreonine; by MAPK (T225). A disordered region spans residues 377-454; sequence EGSSAASAGE…VTDANASGAS (78 aa). At S411 the chain carries Phosphoserine. The residue at position 435 (T435) is a Phosphothreonine. Residues S443 and S451 each carry the phosphoserine modification.

The protein belongs to the GORASP family. In terms of assembly, homodimer. Homooligomer. ER stress induces phosphorylation-dependent monomerization. Interacts with BLZF1/Golgin 45. Identified in a complex with RAB2 and GORASP2. Interacts with JAM2 and JAM3. Interacts with members of the p24 cargo receptors. Interacts with CNIH1 and the cytoplasmic domain of transmembrane TGFA, prior its transit in the trans-Golgi. Interacts with KCTD5. Interacts with TMED2 and TMED3. Interacts with SEC16A in response to ER stress. Interacts (via PDZ GRASP-type 1 domain) with core-glycosylated CFTR in response to ER stress. Myristoylated. Myristoylation is essential for the Golgi targeting. Post-translationally, palmitoylated. In terms of processing, phosphorylated in mitotic cells. ER stress-induced phosphorylation at Ser-443 induces monomerization and subsequent relocalization from Golgi to ER which is essential for mediating unconventional (ER/Golgi-independent) trafficking of CFTR to the cell membrane. Detected in lung, brain, heart, liver and testis.

It is found in the golgi apparatus membrane. The protein resides in the endoplasmic reticulum membrane. The protein localises to the golgi apparatus. Functionally, key structural protein of the Golgi apparatus. The membrane cisternae of the Golgi apparatus adhere to each other to form stacks, which are aligned side by side to form the Golgi ribbon. Acting in concert with GORASP1/GRASP65, is required for the formation and maintenance of the Golgi ribbon, and may be dispensable for the formation of stacks. However, other studies suggest that GORASP2 plays a role in the assembly and membrane stacking of the Golgi cisternae, and in the process by which Golgi stacks reform after breakdown during mitosis and meiosis. May regulate the intracellular transport and presentation of a defined set of transmembrane proteins, such as transmembrane TGFA. Required for normal acrosome formation during spermiogenesis and normal male fertility, probably by promoting colocalization of JAM2 and JAM3 at contact sites between germ cells and Sertoli cells. Mediates ER stress-induced unconventional (ER/Golgi-independent) trafficking of core-glycosylated CFTR to cell membrane. This Rattus norvegicus (Rat) protein is Golgi reassembly-stacking protein 2 (Gorasp2).